The primary structure comprises 202 residues: Probable nicotinate-nucleotide adenylyltransferase (202 aa).

This sequence belongs to the NadD family.

It catalyses the reaction nicotinate beta-D-ribonucleotide + ATP + H(+) = deamido-NAD(+) + diphosphate. The protein operates within cofactor biosynthesis; NAD(+) biosynthesis; deamido-NAD(+) from nicotinate D-ribonucleotide: step 1/1. Catalyzes the reversible adenylation of nicotinate mononucleotide (NaMN) to nicotinic acid adenine dinucleotide (NaAD). The protein is Probable nicotinate-nucleotide adenylyltransferase of Clostridium perfringens (strain 13 / Type A).